An 859-amino-acid polypeptide reads, in one-letter code: Leucine--tRNA ligase (859 aa).

A 'HIGH' region motif is present at residues proline 42–histidine 52. A 'KMSKS' region motif is present at residues lysine 618–serine 622. Lysine 621 provides a ligand contact to ATP.

This sequence belongs to the class-I aminoacyl-tRNA synthetase family.

The protein localises to the cytoplasm. It carries out the reaction tRNA(Leu) + L-leucine + ATP = L-leucyl-tRNA(Leu) + AMP + diphosphate. This Shewanella sp. (strain MR-4) protein is Leucine--tRNA ligase.